We begin with the raw amino-acid sequence, 493 residues long: tRNA(Ile)-lysidine synthase, chloroplastic (493 aa).

68 to 73 (SGGQDS) contacts ATP.

This sequence belongs to the tRNA(Ile)-lysidine synthase family.

The protein localises to the plastid. It localises to the chloroplast. The enzyme catalyses cytidine(34) in tRNA(Ile2) + L-lysine + ATP = lysidine(34) in tRNA(Ile2) + AMP + diphosphate + H(+). Its function is as follows. Ligates lysine onto the cytidine present at position 34 of the AUA codon-specific tRNA(Ile) that contains the anticodon CAU, in an ATP-dependent manner. Cytidine is converted to lysidine, thus changing the amino acid specificity of the tRNA from methionine to isoleucine. The sequence is that of tRNA(Ile)-lysidine synthase, chloroplastic from Staurastrum punctulatum (Green alga).